The chain runs to 529 residues: BTB/POZ domain-containing protein 6 (529 aa).

Residues 127-197 (ADVHFIVGPA…LYSDEIDLEA (71 aa)) enclose the BTB domain.

In terms of assembly, homodimer and heterodimer. Interacts with cul3 via the BTB domain.

It is found in the cytoplasm. In terms of biological role, adapter protein for the cul3 E3 ubiquitin-protein ligase complex. Involved in late neuronal development and muscle formation. The chain is BTB/POZ domain-containing protein 6 (btbd6) from Xenopus laevis (African clawed frog).